A 948-amino-acid polypeptide reads, in one-letter code: RNA polymerase-associated protein RapA (948 aa).

In terms of domain architecture, Helicase ATP-binding spans 164-332 (EVADRSAPRV…FARLRLLDPN (169 aa)). 177-184 (DEVGLGKT) contributes to the ATP binding site. A DEAH box motif is present at residues 278–281 (DEAH). Positions 473–627 (RVDWLIDTLK…TCPTGNALQH (155 aa)) constitute a Helicase C-terminal domain.

Belongs to the SNF2/RAD54 helicase family. RapA subfamily. In terms of assembly, interacts with the RNAP. Has a higher affinity for the core RNAP than for the holoenzyme. Its ATPase activity is stimulated by binding to RNAP.

In terms of biological role, transcription regulator that activates transcription by stimulating RNA polymerase (RNAP) recycling in case of stress conditions such as supercoiled DNA or high salt concentrations. Probably acts by releasing the RNAP, when it is trapped or immobilized on tightly supercoiled DNA. Does not activate transcription on linear DNA. Probably not involved in DNA repair. This is RNA polymerase-associated protein RapA from Pseudomonas putida (strain W619).